Reading from the N-terminus, the 47-residue chain is Ruminococcin-A (47 aa).

The N-terminal stretch at 1–23 (MRNDVLTLTNPMEENELEQILGG) is a signal peptide. 2,3-didehydrobutyrine occurs at positions 30 and 39. Residues 30–35 (TISHEC) constitute a cross-link (beta-methyllanthionine (Thr-Cys)). The lanthionine (Ser-Cys) cross-link spans 32–46 (SHECNMNTWQFLFTC). The segment at residues 45 to 47 (TCC) is a cross-link (beta-methyllanthionine (Thr-Cys)).

It belongs to the type A lantibiotic family. Post-translationally, maturation of lantibiotics involves the enzymatic conversion of Thr, and Ser into dehydrated AA and the formation of thioether bonds with cysteine. This is followed by membrane translocation and cleavage of the modified precursor.

The protein resides in the secreted. Lanthionine-containing peptide antibiotic (lantibiotic) active on Gram-positive bacteria. The bactericidal activity of lantibiotics is based on depolarization of energized bacterial cytoplasmic membranes, initiated by the formation of aqueous transmembrane pores. Ruminococcin A is a broad spectrum bacteriocin exhibiting activity against a wide range of pathogenic clostridia and B.longum. The chain is Ruminococcin-A (rumA1) from Blautia hansenii (Ruminococcus hansenii).